Here is a 267-residue protein sequence, read N- to C-terminus: Hydroxyethylthiazole kinase (267 aa).

Met-49 serves as a coordination point for substrate. The ATP site is built by Arg-124 and Thr-170. Residue Gly-197 participates in substrate binding.

This sequence belongs to the Thz kinase family. Mg(2+) is required as a cofactor.

The enzyme catalyses 5-(2-hydroxyethyl)-4-methylthiazole + ATP = 4-methyl-5-(2-phosphooxyethyl)-thiazole + ADP + H(+). It participates in cofactor biosynthesis; thiamine diphosphate biosynthesis; 4-methyl-5-(2-phosphoethyl)-thiazole from 5-(2-hydroxyethyl)-4-methylthiazole: step 1/1. Its function is as follows. Catalyzes the phosphorylation of the hydroxyl group of 4-methyl-5-beta-hydroxyethylthiazole (THZ). The sequence is that of Hydroxyethylthiazole kinase from Tolumonas auensis (strain DSM 9187 / NBRC 110442 / TA 4).